The primary structure comprises 174 residues: Large ribosomal subunit protein uL10 (174 aa).

Belongs to the universal ribosomal protein uL10 family. Part of the ribosomal stalk of the 50S ribosomal subunit. The N-terminus interacts with L11 and the large rRNA to form the base of the stalk. The C-terminus forms an elongated spine to which L12 dimers bind in a sequential fashion forming a multimeric L10(L12)X complex.

Its function is as follows. Forms part of the ribosomal stalk, playing a central role in the interaction of the ribosome with GTP-bound translation factors. The protein is Large ribosomal subunit protein uL10 of Anaeromyxobacter dehalogenans (strain 2CP-C).